A 527-amino-acid polypeptide reads, in one-letter code: Bifunctional purine biosynthesis protein PurH (527 aa).

In terms of domain architecture, MGS-like spans 1–149; that stretch reads MASDFLPVRR…KNFARVAVAT (149 aa).

The protein belongs to the PurH family.

The enzyme catalyses (6R)-10-formyltetrahydrofolate + 5-amino-1-(5-phospho-beta-D-ribosyl)imidazole-4-carboxamide = 5-formamido-1-(5-phospho-D-ribosyl)imidazole-4-carboxamide + (6S)-5,6,7,8-tetrahydrofolate. It carries out the reaction IMP + H2O = 5-formamido-1-(5-phospho-D-ribosyl)imidazole-4-carboxamide. It participates in purine metabolism; IMP biosynthesis via de novo pathway; 5-formamido-1-(5-phospho-D-ribosyl)imidazole-4-carboxamide from 5-amino-1-(5-phospho-D-ribosyl)imidazole-4-carboxamide (10-formyl THF route): step 1/1. The protein operates within purine metabolism; IMP biosynthesis via de novo pathway; IMP from 5-formamido-1-(5-phospho-D-ribosyl)imidazole-4-carboxamide: step 1/1. The sequence is that of Bifunctional purine biosynthesis protein PurH from Xanthomonas oryzae pv. oryzae (strain PXO99A).